The primary structure comprises 289 residues: BTB/POZ domain-containing protein KCTD7 (289 aa).

Positions 1–35 are disordered; it reads MVVVTGREPDSRRQDGAMSSSDAEDDFLEPATPTA. Positions 51-149 constitute a BTB domain; that stretch reads EVVPLNIGGA…QLENMQPLKG (99 aa).

In terms of assembly, interacts with CUL3.

It is found in the cell membrane. The protein resides in the cytoplasm. Its subcellular location is the cytosol. Its function is as follows. May be involved in the control of excitability of cortical neurons. This Homo sapiens (Human) protein is BTB/POZ domain-containing protein KCTD7 (KCTD7).